The chain runs to 197 residues: Probable inosine/xanthosine triphosphatase (197 aa).

9 to 14 (TSNPIK) contacts substrate. Residues aspartate 36 and aspartate 65 each contribute to the Mg(2+) site.

This sequence belongs to the YjjX NTPase family. Homodimer. Mg(2+) is required as a cofactor. It depends on Mn(2+) as a cofactor.

It carries out the reaction XTP + H2O = XDP + phosphate + H(+). The catalysed reaction is ITP + H2O = IDP + phosphate + H(+). Phosphatase that hydrolyzes non-canonical purine nucleotides such as XTP and ITP to their respective diphosphate derivatives. Probably excludes non-canonical purines from DNA/RNA precursor pool, thus preventing their incorporation into DNA/RNA and avoiding chromosomal lesions. The polypeptide is Probable inosine/xanthosine triphosphatase (Aeropyrum pernix (strain ATCC 700893 / DSM 11879 / JCM 9820 / NBRC 100138 / K1)).